A 410-amino-acid chain; its full sequence is MASVAASSSISFAASFLKIKAFPLSPRFFPIRTLRCSVSSSSSEPIEFDISFAPPKPKPSSTHGGVTPQQLFIPWIVRSDDGTLKLQSQPPARLIHNLAIDATTQNPKKKDKSKKKQPQATSSSSATTTASSPASHSEVKPKLSKAARRFYNENFKEQPQRLSKVLAAAGVASRRTSEELIFDGKVTVNGILCNTPQTRVDPSRDIIYVNGNRIPKKLPPKVYFALNKPKGYICSSGEKEIKSAISLFDEYLSSWDKRNPGTPKPRLFTVGRLDVATTGLIVVTNDGDFAQKLSHPSSSLPKEYITTVVGDIHKRHLMAISEGTMVEGVHCVPDSVELMPKQHDIPRARLRIVVHEGRNHEVRELVKNAGLEVHSLKRVRIGGFRLPSDLGLGKHVELKQSELKALGWKN.

The transit peptide at 1 to 35 (MASVAASSSISFAASFLKIKAFPLSPRFFPIRTLR) directs the protein to the chloroplast. The interval 96–143 (HNLAIDATTQNPKKKDKSKKKQPQATSSSSATTTASSPASHSEVKPKL) is disordered. A compositionally biased stretch (basic residues) spans 107 to 117 (PKKKDKSKKKQ). The span at 118–135 (PQATSSSSATTTASSPAS) shows a compositional bias: low complexity. In terms of domain architecture, S4 RNA-binding spans 160–229 (QRLSKVLAAA…PKVYFALNKP (70 aa)). D274 serves as the catalytic Nucleophile.

It belongs to the pseudouridine synthase RsuA family. Highly expressed in young seedlings. Expressed in roots, rosette leaves, cauline leaves, stems and flowers.

It is found in the plastid. It localises to the chloroplast. Its function is as follows. Responsible for synthesis of pseudouridine in chloroplastic 23S ribosomal RNA. Necessary for normal chloroplast rRNA processing and translation. Required for normal chloroplast development and maintenance. May function in other plastids, such as root amyloplasts. This chain is Putative ribosomal large subunit pseudouridine synthase SVR1, chloroplastic (SVR1), found in Arabidopsis thaliana (Mouse-ear cress).